The primary structure comprises 202 residues: Venom allergen 5 (202 aa).

Cystine bridges form between cysteine 4–cysteine 16, cysteine 8–cysteine 101, and cysteine 26–cysteine 94. At tyrosine 107 the chain carries Phosphotyrosine. An N-linked (Glc) (glycation) lysine glycan is attached at lysine 138. Cysteine 168 and cysteine 185 are oxidised to a cystine.

It belongs to the CRISP family. Expressed by the venom gland.

The protein resides in the secreted. Functionally, does not show toxicity when intravenously injected into mice tail. This is Venom allergen 5 from Vespa velutina (Asian yellow-legged hornet).